We begin with the raw amino-acid sequence, 215 residues long: Adenylate kinase (215 aa).

10–15 (GAGKGT) lines the ATP pocket. The NMP stretch occupies residues 30-59 (STGDMLRAAVKAGTPIGLKAKAVMEAGELV). AMP is bound by residues Thr31, Arg36, 57–59 (ELV), 85–88 (GYPR), and Gln92. Positions 126–163 (GRYTCANCGEGYHDRFKQPKVAGVCDVCGSAEFKRRPD) are LID. Position 127 (Arg127) interacts with ATP. Residues Cys130, Cys133, Cys150, and Cys153 each contribute to the Zn(2+) site. 2 residues coordinate AMP: Arg160 and Arg172. Ala200 contacts ATP.

It belongs to the adenylate kinase family. In terms of assembly, monomer.

Its subcellular location is the cytoplasm. The catalysed reaction is AMP + ATP = 2 ADP. The protein operates within purine metabolism; AMP biosynthesis via salvage pathway; AMP from ADP: step 1/1. In terms of biological role, catalyzes the reversible transfer of the terminal phosphate group between ATP and AMP. Plays an important role in cellular energy homeostasis and in adenine nucleotide metabolism. In Rhizorhabdus wittichii (strain DSM 6014 / CCUG 31198 / JCM 15750 / NBRC 105917 / EY 4224 / RW1) (Sphingomonas wittichii), this protein is Adenylate kinase.